A 73-amino-acid polypeptide reads, in one-letter code: U-scoloptoxin(22)-Cw1a (73 aa).

Residues 1 to 24 form the signal peptide; it reads MRRFVFLAFVLVLFVIANLDSSSA.

This sequence belongs to the scoloptoxin-22 family. Post-translationally, contains 1 disulfide bond. Expressed by the venom gland.

The protein resides in the secreted. The protein is U-scoloptoxin(22)-Cw1a of Cormocephalus westwoodi (Westwood's green centipede).